The primary structure comprises 426 residues: ATP-dependent Clp protease ATP-binding subunit ClpX (426 aa).

Residues 1-52 (MNEIKKRCSFCNKEESLDNPIINSGITPDVYICNYCLIVGSEILTGYLNKNP) enclose the ClpX-type ZB domain. Residues cysteine 8, cysteine 11, cysteine 33, and cysteine 36 each contribute to the Zn(2+) site. 129–136 (PTGSGKTL) contributes to the ATP binding site.

Belongs to the ClpX chaperone family. Component of the ClpX-ClpP complex. Forms a hexameric ring that, in the presence of ATP, binds to fourteen ClpP subunits assembled into a disk-like structure with a central cavity, resembling the structure of eukaryotic proteasomes.

ATP-dependent specificity component of the Clp protease. It directs the protease to specific substrates. Can perform chaperone functions in the absence of ClpP. The polypeptide is ATP-dependent Clp protease ATP-binding subunit ClpX (Helicobacter hepaticus (strain ATCC 51449 / 3B1)).